The sequence spans 677 residues: Methionine--tRNA ligase (677 aa).

The 'HIGH' region signature appears at Pro-15–His-25. 4 residues coordinate Zn(2+): Cys-146, Cys-149, Cys-159, and Cys-162. A 'KMSKS' region motif is present at residues Lys-333–Ser-337. Lys-336 serves as a coordination point for ATP. Positions Asp-575–Lys-677 constitute a tRNA-binding domain.

It belongs to the class-I aminoacyl-tRNA synthetase family. MetG type 1 subfamily. As to quaternary structure, homodimer. The cofactor is Zn(2+).

It localises to the cytoplasm. It carries out the reaction tRNA(Met) + L-methionine + ATP = L-methionyl-tRNA(Met) + AMP + diphosphate. In terms of biological role, is required not only for elongation of protein synthesis but also for the initiation of all mRNA translation through initiator tRNA(fMet) aminoacylation. In Escherichia coli O17:K52:H18 (strain UMN026 / ExPEC), this protein is Methionine--tRNA ligase.